The chain runs to 107 residues: Pre-mRNA-splicing factor RDS3 (107 aa).

Belongs to the PHF5 family. As to quaternary structure, component of the spliceosome where it interacts with CUS1, HSH49, HSH155, IST3 and RSE1. Also interacts with YRA1.

Its subcellular location is the nucleus. In terms of biological role, required for pre-mRNA splicing. Involved in regulation of drug sensitivity and may play a role in multidrug resistance. This Saccharomyces cerevisiae (strain ATCC 204508 / S288c) (Baker's yeast) protein is Pre-mRNA-splicing factor RDS3 (RDS3).